We begin with the raw amino-acid sequence, 257 residues long: Pyridoxal phosphate homeostasis protein (257 aa).

S2 is modified (N-acetylserine). An N6-(pyridoxal phosphate)lysine modification is found at K49.

The protein belongs to the pyridoxal phosphate-binding protein YggS/PROSC family.

Its subcellular location is the cytoplasm. It localises to the nucleus. Pyridoxal 5'-phosphate (PLP)-binding protein, which may be involved in intracellular homeostatic regulation of pyridoxal 5'-phosphate (PLP), the active form of vitamin B6. This Saccharomyces cerevisiae (strain ATCC 204508 / S288c) (Baker's yeast) protein is Pyridoxal phosphate homeostasis protein.